The chain runs to 1179 residues: Protein FAM83H (1179 aa).

Positions 1–286 (MARRSQSSSQ…LFAQSEPLVP (286 aa)) are DUF1669. The tract at residues 1–286 (MARRSQSSSQ…LFAQSEPLVP (286 aa)) is mediates interaction with CSNK1A1 and is required for FAM83H activity in keratin cytoskeleton organization. Thr-465 is subject to Phosphothreonine. Disordered stretches follow at residues 484–577 (ADPD…GRAG) and 636–669 (FPTK…DSFR). Residues Ser-513, Ser-514, Ser-516, Ser-523, Ser-647, and Ser-667 each carry the phosphoserine modification. At Thr-756 the chain carries Phosphothreonine. A phosphoserine mark is found at Ser-759, Ser-785, and Ser-813. Residues 830–1026 (RLPSRFLSAQ…RGPRARLSSA (197 aa)) are disordered. Positions 836–847 (LSAQSHSTSPQG) are enriched in polar residues. Phosphoserine is present on residues Ser-870 and Ser-881. A Phosphothreonine modification is found at Thr-883. Residues 884–906 (PGFSTRRGSPTTGFIEQKGSPTS) are compositionally biased toward polar residues. A Phosphoserine modification is found at Ser-892. Thr-894 is subject to Phosphothreonine. 9 positions are modified to phosphoserine: Ser-903, Ser-914, Ser-925, Ser-936, Ser-945, Ser-1003, Ser-1009, Ser-1024, and Ser-1025. Thr-1040 is subject to Phosphothreonine. Disordered regions lie at residues 1047 to 1084 (ISAH…APDM) and 1143 to 1165 (EEAS…SKVG). 3 positions are modified to phosphoserine: Ser-1048, Ser-1068, and Ser-1147.

It belongs to the FAM83 family. As to quaternary structure, directly interacts (via DUF1669) with casein kinase isoforms CSNK1A1, CSNK1A1L, CSNK1D and CSNK1E. Interaction with CSNK1A1 recruits CSNK1A1 to keratin filaments. Interacts with KRT18 and probably other keratins. In terms of tissue distribution, expressed in the tooth follicle.

The protein resides in the cytoplasm. The protein localises to the cytoskeleton. Its function is as follows. May play a major role in the structural organization and calcification of developing enamel. May play a role in keratin cytoskeleton disassembly by recruiting CSNK1A1 to keratin filaments. Thereby, it may regulate epithelial cell migration. This chain is Protein FAM83H, found in Homo sapiens (Human).